The following is a 316-amino-acid chain: Olfactory receptor 4N4 (316 aa).

The Extracellular segment spans residues Met-1–Leu-25. Residue Asn-5 is glycosylated (N-linked (GlcNAc...) asparagine). A helical transmembrane segment spans residues Leu-26–Ile-49. The Cytoplasmic segment spans residues Arg-50 to Ala-57. Residues Pro-58–Pro-79 form a helical membrane-spanning segment. Residues Arg-80–Gln-100 are Extracellular-facing. Cys-97 and Cys-189 are joined by a disulfide. Residues Leu-101–Phe-120 traverse the membrane as a helical segment. Residues Asp-121–Arg-139 are Cytoplasmic-facing. The chain crosses the membrane as a helical span at residues Ala-140–Ile-158. The Extracellular portion of the chain corresponds to Gln-159–Val-195. Residues Glu-196–Ala-219 form a helical membrane-spanning segment. Over Val-220 to Lys-235 the chain is Cytoplasmic. A helical membrane pass occupies residues Ala-236–Tyr-258. The Extracellular portion of the chain corresponds to Met-259–Lys-269. Residues Met-270–Leu-289 form a helical membrane-spanning segment. The Cytoplasmic segment spans residues Arg-290–Asn-316.

It belongs to the G-protein coupled receptor 1 family.

It localises to the cell membrane. Functionally, odorant receptor. The protein is Olfactory receptor 4N4 (OR4N4) of Homo sapiens (Human).